Reading from the N-terminus, the 104-residue chain is DNA-binding transcriptional repressor TubR (104 aa).

2 consecutive DNA-binding regions (HTH) follow at residues 43–50 and 54–65; these read KTAVAEMI and KPTVFATVNSFY.

In terms of assembly, homodimer. Binds to tubC DNA, the TubR-DNA complex binds to TubZ.

Functionally, a DNA-binding protein that is part of the type III plasmid partition system used to ensure correct segregation of the pBtoxis plasmid. Cooperatively binds to the centromere-like site (tubC), which may seed filament formation by the TubZ polymerizing GTPase, stabilizing TubZ filaments. TubR-tubC complexes track the depolymerizing minus end of the filament, probably pulling plasmid within the cell. Required for plasmid replication. Negatively regulates levels of TubZ; its effect on RNA expression has not been shown. Specifically binds iterons, 12-bp imperfect direct repeats that function as a plasmid origin of replication. Four TubR dimers bind to tubC, forming an extended bent DNA-protein filament with protein wrapping helically around the outside of the DNA. The chain is DNA-binding transcriptional repressor TubR from Bacillus thuringiensis subsp. israelensis.